The following is a 364-amino-acid chain: Peptidoglycan transport system permease protein YejB (364 aa).

6 consecutive transmembrane segments (helical) span residues 9 to 29 (LALMIPTIVGIMGISFLVIQF), 134 to 154 (SASLGFWILIISYVISIPLGI), 171 to 191 (IIIIGYAVPSFLFGILLIVLF), 219 to 239 (IIDYFWHLTLPLIALSLSAFA), 283 to 303 (IVIAGFPGAFISAFFTGSLLI), and 325 to 345 (YPIVFGTLFIFSLMGLVVGLL). Residues 131–350 (LPVSASLGFW…VVGLLSDLIY (220 aa)) form the ABC transmembrane type-1 domain.

The protein belongs to the binding-protein-dependent transport system permease family. In terms of assembly, the complex is composed of one ATP-binding protein (YejF), two transmembrane proteins (YejB and YejE) and a solute-binding protein (YepA or YejA).

It is found in the cell inner membrane. In terms of biological role, part of the ABC transporter complex YejBEF-YepA involved in the uptake of muropeptides, the breakdown products of cell wall peptidoglycan. The import of muropeptides into the cell enables peptidoglycan recycling, which is vital for cell wall integrity in this bacterium. Is also probably part of the ABC transporter complex YejABEF, which is likely involved in broad-spectrum peptide import. Responsible for the translocation of the substrate across the membrane. This is Peptidoglycan transport system permease protein YejB from Agrobacterium fabrum (strain C58 / ATCC 33970) (Agrobacterium tumefaciens (strain C58)).